A 101-amino-acid chain; its full sequence is MPFSHTKIVGPAGRYGARYGMGLRRKITAIEIKQRGKHRCPSCRSLVRLKRLAFGIWQCPKCGFTFAGGAWVPQTVMGKTLTPEELKEVEIQKARWRETGK.

Residues Cys-40–Cys-62 form a C4-type zinc finger.

The protein belongs to the eukaryotic ribosomal protein eL43 family. Requires Zn(2+) as cofactor.

In Pyrobaculum islandicum (strain DSM 4184 / JCM 9189 / GEO3), this protein is Large ribosomal subunit protein eL43.